We begin with the raw amino-acid sequence, 428 residues long: ATP phosphoribosyltransferase regulatory subunit (428 aa).

This sequence belongs to the class-II aminoacyl-tRNA synthetase family. HisZ subfamily. Heteromultimer composed of HisG and HisZ subunits.

It is found in the cytoplasm. It participates in amino-acid biosynthesis; L-histidine biosynthesis; L-histidine from 5-phospho-alpha-D-ribose 1-diphosphate: step 1/9. Functionally, required for the first step of histidine biosynthesis. May allow the feedback regulation of ATP phosphoribosyltransferase activity by histidine. This Syntrophotalea carbinolica (strain DSM 2380 / NBRC 103641 / GraBd1) (Pelobacter carbinolicus) protein is ATP phosphoribosyltransferase regulatory subunit.